A 200-amino-acid chain; its full sequence is Rho-related protein racH (200 aa).

Residue 11-18 (GDMSVGKT) coordinates GTP. The short motif at 33–41 (YVPTVFDNY) is the Effector region element. GTP contacts are provided by residues 58-62 (DTAGS) and 117-120 (TKLD). The disordered stretch occupies residues 178-200 (EELAKSKKDSKKGDKDSKDCIIQ). Cys197 is subject to Cysteine methyl ester. Cys197 is lipidated: S-geranylgeranyl cysteine. Positions 198–200 (IIQ) are cleaved as a propeptide — removed in mature form.

This sequence belongs to the small GTPase superfamily. Rho family.

It localises to the cell membrane. In Dictyostelium discoideum (Social amoeba), this protein is Rho-related protein racH (racH).